Consider the following 357-residue polypeptide: Holliday junction branch migration complex subunit RuvB (357 aa).

The segment at 4-195 is large ATPase domain (RuvB-L); sequence TDKLAAKAVS…FGIVARLEFY (192 aa). Residues Leu-34, Arg-35, Gly-76, Lys-79, Thr-80, Thr-81, 142–144, Arg-185, Tyr-195, and Arg-232 contribute to the ATP site; that span reads EDY. Thr-80 provides a ligand contact to Mg(2+). The tract at residues 196–266 is small ATPAse domain (RuvB-S); it reads TPTELARIVT…VADAALAMLD (71 aa). The head domain (RuvB-H) stretch occupies residues 269 to 357; that stretch reads AVGFDLMDRK…PARDLWDNNA (89 aa). 3 residues coordinate DNA: Arg-305, Arg-324, and Arg-329.

Belongs to the RuvB family. Homohexamer. Forms an RuvA(8)-RuvB(12)-Holliday junction (HJ) complex. HJ DNA is sandwiched between 2 RuvA tetramers; dsDNA enters through RuvA and exits via RuvB. An RuvB hexamer assembles on each DNA strand where it exits the tetramer. Each RuvB hexamer is contacted by two RuvA subunits (via domain III) on 2 adjacent RuvB subunits; this complex drives branch migration. In the full resolvosome a probable DNA-RuvA(4)-RuvB(12)-RuvC(2) complex forms which resolves the HJ.

Its subcellular location is the cytoplasm. The catalysed reaction is ATP + H2O = ADP + phosphate + H(+). Its function is as follows. The RuvA-RuvB-RuvC complex processes Holliday junction (HJ) DNA during genetic recombination and DNA repair, while the RuvA-RuvB complex plays an important role in the rescue of blocked DNA replication forks via replication fork reversal (RFR). RuvA specifically binds to HJ cruciform DNA, conferring on it an open structure. The RuvB hexamer acts as an ATP-dependent pump, pulling dsDNA into and through the RuvAB complex. RuvB forms 2 homohexamers on either side of HJ DNA bound by 1 or 2 RuvA tetramers; 4 subunits per hexamer contact DNA at a time. Coordinated motions by a converter formed by DNA-disengaged RuvB subunits stimulates ATP hydrolysis and nucleotide exchange. Immobilization of the converter enables RuvB to convert the ATP-contained energy into a lever motion, pulling 2 nucleotides of DNA out of the RuvA tetramer per ATP hydrolyzed, thus driving DNA branch migration. The RuvB motors rotate together with the DNA substrate, which together with the progressing nucleotide cycle form the mechanistic basis for DNA recombination by continuous HJ branch migration. Branch migration allows RuvC to scan DNA until it finds its consensus sequence, where it cleaves and resolves cruciform DNA. In Ralstonia nicotianae (strain ATCC BAA-1114 / GMI1000) (Ralstonia solanacearum), this protein is Holliday junction branch migration complex subunit RuvB.